Reading from the N-terminus, the 202-residue chain is uncharacterized protein (202 aa).

An Isoglutamyl lysine isopeptide (Lys-Gln) (interchain with Q-Cter in protein Pup) cross-link involves residue lysine 136.

This is an uncharacterized protein from Mycobacterium tuberculosis (strain CDC 1551 / Oshkosh).